Here is a 778-residue protein sequence, read N- to C-terminus: General transcription and DNA repair factor IIH helicase subunit XPD/RAD3 (778 aa).

The Helicase ATP-binding domain maps to 7–285 (DLPVLFPYPK…KVDSQKLQDE (279 aa)). 42–49 (MPSGTGKT) contributes to the ATP binding site. 4 residues coordinate [4Fe-4S] cluster: Cys-115, Cys-133, Cys-156, and Cys-191. The DEAH box signature appears at 235 to 238 (DEAH). A compositionally biased stretch (basic and acidic residues) spans 750 to 765 (SRKDQGGFIENENKEG). The interval 750–778 (SRKDQGGFIENENKEGEQDEDEDEDIEMQ) is disordered. Over residues 766–778 (EQDEDEDEDIEMQ) the composition is skewed to acidic residues.

It belongs to the helicase family. RAD3/XPD subfamily. Component of the 7-subunit TFIIH core complex composed of XPB/SSL2, XPD/RAD3, SSL1, TFB1, TFB2, TFB4 and TFB5, which is active in NER. The core complex associates with the 3-subunit CTD-kinase module TFIIK composed of CCL1, KIN28 and TFB3 to form the 10-subunit holoenzyme (holo-TFIIH) active in transcription. An additionnal subunit, TFB6, plays a role in the dissociation of the SSL2 helicase from TFIIH after transcription initiation. The cofactor is [4Fe-4S] cluster. It depends on Mg(2+) as a cofactor.

The protein resides in the nucleus. It carries out the reaction Couples ATP hydrolysis with the unwinding of duplex DNA at the replication fork by translocating in the 5'-3' direction. This creates two antiparallel DNA single strands (ssDNA). The leading ssDNA polymer is the template for DNA polymerase III holoenzyme which synthesizes a continuous strand.. The catalysed reaction is ATP + H2O = ADP + phosphate + H(+). In terms of biological role, ATP-dependent 5'-3' DNA helicase. Component of the general transcription and DNA repair factor IIH (TFIIH) core complex, which is involved in general and transcription-coupled nucleotide excision repair (NER) of damaged DNA and, when complexed to TFIIK, in RNA transcription by RNA polymerase II. In NER, TFIIH acts by opening DNA around the lesion to allow the excision of the damaged oligonucleotide and its replacement by a new DNA fragment. The ATP-dependent helicase activity of XPD/RAD3 is required for DNA opening. In transcription, TFIIH has an essential role in transcription initiation. When the pre-initiation complex (PIC) has been established, TFIIH is required for promoter opening and promoter escape. Phosphorylation of the C-terminal tail (CTD) of the largest subunit of RNA polymerase II by the kinase module TFIIK controls the initiation of transcription. XPD/RAD3 acts by forming a bridge between TFIIK and the core-TFIIH complex. Involved in the maintenance of the fidelity of DNA replication. Has single-stranded DNA-dependent ATPase activity. 5'-3' DNA helicase activity requires ATP (dATP partially substitutes), will unwind over 800 bp dsDNA. Able to unwind an RNA:DNA hybrid. This is General transcription and DNA repair factor IIH helicase subunit XPD/RAD3 from Saccharomyces cerevisiae (strain ATCC 204508 / S288c) (Baker's yeast).